The primary structure comprises 606 residues: NADH-ubiquinone oxidoreductase chain 5 (606 aa).

Transmembrane regions (helical) follow at residues methionine 1–methionine 21, alanine 43–isoleucine 63, isoleucine 88–methionine 108, phenylalanine 117–leucine 137, leucine 140–glycine 160, alanine 171–threonine 191, leucine 209–leucine 229, threonine 241–isoleucine 261, methionine 273–leucine 293, leucine 310–cysteine 330, methionine 366–leucine 386, leucine 413–glycine 433, leucine 457–isoleucine 477, leucine 488–alanine 508, phenylalanine 513–methionine 533, and glycine 582–leucine 602.

The protein belongs to the complex I subunit 5 family. In terms of assembly, core subunit of respiratory chain NADH dehydrogenase (Complex I) which is composed of 45 different subunits.

Its subcellular location is the mitochondrion inner membrane. It catalyses the reaction a ubiquinone + NADH + 5 H(+)(in) = a ubiquinol + NAD(+) + 4 H(+)(out). Functionally, core subunit of the mitochondrial membrane respiratory chain NADH dehydrogenase (Complex I) which catalyzes electron transfer from NADH through the respiratory chain, using ubiquinone as an electron acceptor. Essential for the catalytic activity and assembly of complex I. This chain is NADH-ubiquinone oxidoreductase chain 5 (MT-ND5), found in Felis catus (Cat).